Reading from the N-terminus, the 1146-residue chain is Cell division cycle and apoptosis regulator protein 1 (1146 aa).

The tract at residues 1 to 246 (MAQFGGQKNP…AQPQPQSLLQ (246 aa)) is interaction with AR. Positions 200–657 (QRIQTLPNQN…RALSSKGLKS (458 aa)) are interaction with GATA2. Residues 282-351 (IVSQPQPARR…RRERERSPRR (70 aa)) are disordered. 2 stretches are compositionally biased toward basic and acidic residues: residues 290-331 (RRLD…ERSP) and 338-349 (ERSPRRERERSP). The residue at position 453 (Ser453) is a Phosphoserine. Residues 591 to 615 (KQQLVEKLQGERKKADGEQDEEEKD) adopt a coiled-coil conformation. The disordered stretch occupies residues 599-635 (QGERKKADGEQDEEEKDDGEVKEIATPTHWSKLDPKA). Residues 608-618 (EQDEEEKDDGE) are compositionally biased toward acidic residues. Thr624 carries the post-translational modification Phosphothreonine. Residues 633–667 (PKAMKVNDLRKELESRALSSKGLKSQLIARLTKQL) enclose the SAP domain. A Glycyl lysine isopeptide (Lys-Gly) (interchain with G-Cter in ubiquitin) cross-link involves residue Lys634. An interaction with GATA1 region spans residues 640 to 1146 (DLRKELESRA…EKSKENGSGV (507 aa)). Thr664 bears the Phosphothreonine mark. Basic and acidic residues-rich tracts occupy residues 671–684 (EQKE…KSEK), 691–716 (DKKS…RQER), 793–814 (KEDK…KKEE), and 829–852 (SGDD…KDDS). Disordered regions lie at residues 671 to 716 (EQKE…RQER) and 793 to 912 (KEDK…KEKP). Phosphoserine occurs at positions 682 and 694. The segment covering 853 to 884 (KDDDETEEDNNQDEYDPMEAEEAEDEDDDREE) has biased composition (acidic residues). The residue at position 858 (Thr858) is a Phosphothreonine. The span at 885–912 (EEVKRDDKRDVSRYCKDRPAKDKEKEKP) shows a compositional bias: basic and acidic residues. Lys1008 is covalently cross-linked (Glycyl lysine isopeptide (Lys-Gly) (interchain with G-Cter in SUMO1); alternate). Residue Lys1008 forms a Glycyl lysine isopeptide (Lys-Gly) (interchain with G-Cter in SUMO2); alternate linkage. Residues 1029–1110 (DVGSLLQKLE…LQFENQLNKT (82 aa)) are a coiled coil. Glycyl lysine isopeptide (Lys-Gly) (interchain with G-Cter in SUMO2) cross-links involve residues Lys1063 and Lys1131.

In terms of assembly, directly interacts with ESR1, NR3C1 and p53/TP53. Interacts (via N-terminus) with CALCOCO1. Interacts with MED1 and GATA1. Interacts with AR and GATA2.

It is found in the cytoplasm. Its subcellular location is the perinuclear region. In terms of biological role, associates with components of the Mediator and p160 coactivator complexes that play a role as intermediaries transducing regulatory signals from upstream transcriptional activator proteins to basal transcription machinery at the core promoter. Recruited to endogenous nuclear receptor target genes in response to the appropriate hormone. Also functions as a p53 coactivator. May thus play an important role in transcriptional regulation. May be involved in apoptosis signaling in the presence of the retinoid CD437. Apoptosis induction involves sequestration of 14-3-3 protein(s) and mediated altered expression of multiple cell cycle regulatory genes including MYC, CCNB1 and CDKN1A. Plays a role in cell cycle progression and/or cell proliferation. In association with CALCOCO1 enhances GATA1- and MED1-mediated transcriptional activation from the gamma-globin promoter during erythroid differentiation of K562 erythroleukemia cells. Can act as a both a coactivator and corepressor of AR-mediated transcription. Contributes to chromatin looping and AR transcription complex assembly by stabilizing AR-GATA2 association on chromatin and facilitating MED1 and RNA polymerase II recruitment to AR-binding sites. May play an important role in the growth and tumorigenesis of prostate cancer cells. The protein is Cell division cycle and apoptosis regulator protein 1 (Ccar1) of Mus musculus (Mouse).